The following is a 309-amino-acid chain: Glutaminase (309 aa).

Substrate contacts are provided by serine 65, asparagine 117, glutamate 162, asparagine 169, tyrosine 193, tyrosine 245, and valine 263.

Belongs to the glutaminase family. In terms of assembly, homotetramer.

The enzyme catalyses L-glutamine + H2O = L-glutamate + NH4(+). The protein is Glutaminase of Bacillus cytotoxicus (strain DSM 22905 / CIP 110041 / 391-98 / NVH 391-98).